Here is a 118-residue protein sequence, read N- to C-terminus: Small ribosomal subunit protein uS13 (118 aa).

The interval 94 to 118 (GLPVRGQRTKTNARTRKGPRKPIKK) is disordered.

It belongs to the universal ribosomal protein uS13 family. Part of the 30S ribosomal subunit. Forms a loose heterodimer with protein S19. Forms two bridges to the 50S subunit in the 70S ribosome.

In terms of biological role, located at the top of the head of the 30S subunit, it contacts several helices of the 16S rRNA. In the 70S ribosome it contacts the 23S rRNA (bridge B1a) and protein L5 of the 50S subunit (bridge B1b), connecting the 2 subunits; these bridges are implicated in subunit movement. Contacts the tRNAs in the A and P-sites. The polypeptide is Small ribosomal subunit protein uS13 (Erwinia tasmaniensis (strain DSM 17950 / CFBP 7177 / CIP 109463 / NCPPB 4357 / Et1/99)).